A 362-amino-acid chain; its full sequence is Molybdenum import ATP-binding protein ModC (362 aa).

The region spanning 2–236 (VSPIEVRLQM…LDLPLAMGDD (235 aa)) is the ABC transporter domain. An ATP-binding site is contributed by 34–41 (GPSGSGKT). The 66-residue stretch at 297–362 (HSSILNRLPV…AQIKAVAVLA (66 aa)) folds into the Mop domain.

This sequence belongs to the ABC transporter superfamily. Molybdate importer (TC 3.A.1.8) family. As to quaternary structure, the complex is composed of two ATP-binding proteins (ModC), two transmembrane proteins (ModB) and a solute-binding protein (ModA).

Its subcellular location is the cell inner membrane. It carries out the reaction molybdate(out) + ATP + H2O = molybdate(in) + ADP + phosphate + H(+). Its function is as follows. Part of the ABC transporter complex ModABC involved in molybdenum import. Responsible for energy coupling to the transport system. The polypeptide is Molybdenum import ATP-binding protein ModC (Pseudomonas syringae pv. tomato (strain ATCC BAA-871 / DC3000)).